The primary structure comprises 352 residues: Elongation factor Ts (352 aa).

Residues 81 to 84 (TDFV) are involved in Mg(2+) ion dislocation from EF-Tu.

Belongs to the EF-Ts family.

The protein localises to the cytoplasm. Its function is as follows. Associates with the EF-Tu.GDP complex and induces the exchange of GDP to GTP. It remains bound to the aminoacyl-tRNA.EF-Tu.GTP complex up to the GTP hydrolysis stage on the ribosome. The chain is Elongation factor Ts from Campylobacter hominis (strain ATCC BAA-381 / DSM 21671 / CCUG 45161 / LMG 19568 / NCTC 13146 / CH001A).